The primary structure comprises 353 residues: Photosystem II D2 protein (353 aa).

Thr-2 carries the post-translational modification N-acetylthreonine. Thr-2 carries the phosphothreonine modification. Residues 41-61 (CAYFALGGWFTGTTFVTSWYT) form a helical membrane-spanning segment. Position 118 (His-118) interacts with chlorophyll a. Residues 125–141 (GFMLRQFELARSVQLRP) form a helical membrane-spanning segment. Residues Gln-130 and Asn-143 each contribute to the pheophytin a site. Residues 153–166 (VFVSVFLIYPLGQS) traverse the membrane as a helical segment. Residue His-198 coordinates chlorophyll a. A helical membrane pass occupies residues 208–228 (AALLCAIHGATVENTLFEDGD). His-215 and Phe-262 together coordinate a plastoquinone. His-215 contributes to the Fe cation binding site. Residue His-269 participates in Fe cation binding. The helical transmembrane segment at 279-295 (GLWMSALGVVGLALNLR) threads the bilayer.

It belongs to the reaction center PufL/M/PsbA/D family. As to quaternary structure, PSII is composed of 1 copy each of membrane proteins PsbA, PsbB, PsbC, PsbD, PsbE, PsbF, PsbH, PsbI, PsbJ, PsbK, PsbL, PsbM, PsbT, PsbX, PsbY, PsbZ, Psb30/Ycf12, at least 3 peripheral proteins of the oxygen-evolving complex and a large number of cofactors. It forms dimeric complexes. It depends on The D1/D2 heterodimer binds P680, chlorophylls that are the primary electron donor of PSII, and subsequent electron acceptors. It shares a non-heme iron and each subunit binds pheophytin, quinone, additional chlorophylls, carotenoids and lipids. There is also a Cl(-1) ion associated with D1 and D2, which is required for oxygen evolution. The PSII complex binds additional chlorophylls, carotenoids and specific lipids. as a cofactor.

The protein localises to the plastid. Its subcellular location is the chloroplast thylakoid membrane. The enzyme catalyses 2 a plastoquinone + 4 hnu + 2 H2O = 2 a plastoquinol + O2. Photosystem II (PSII) is a light-driven water:plastoquinone oxidoreductase that uses light energy to abstract electrons from H(2)O, generating O(2) and a proton gradient subsequently used for ATP formation. It consists of a core antenna complex that captures photons, and an electron transfer chain that converts photonic excitation into a charge separation. The D1/D2 (PsbA/PsbD) reaction center heterodimer binds P680, the primary electron donor of PSII as well as several subsequent electron acceptors. D2 is needed for assembly of a stable PSII complex. The chain is Photosystem II D2 protein from Pelargonium hortorum (Common geranium).